We begin with the raw amino-acid sequence, 100 residues long: MEHQQQQLRNLRDFLLVYNRMTELCFQRCVPSLHHRALDAEEEACLHSCAGKLIHSNHRLMAAYVHLMPALVQRRMADYEAASAVPGVPAEQPRDSPSGS.

Positions 25–49 (CFQRCVPSLHHRALDAEEEACLHSC) match the Twin CX3C motif motif. 2 disulfide bridges follow: C25–C49 and C29–C45.

This sequence belongs to the small Tim family. In terms of assembly, component of the TIM22 complex, which core is composed of TIMM22, associated with TIMM10 (TIMM10A and/or TIMM10B), TIMM9, AGK and TIMM29.

It localises to the mitochondrion inner membrane. Its function is as follows. Component of the TIM22 complex, a complex that mediates the import and insertion of multi-pass transmembrane proteins into the mitochondrial inner membrane. The TIM22 complex forms a twin-pore translocase that uses the membrane potential as the external driving force. In the TIM22 complex, it may act as a docking point for the soluble 70 kDa complex that guides the target proteins in transit through the aqueous mitochondrial intermembrane space. This Rattus norvegicus (Rat) protein is Mitochondrial import inner membrane translocase subunit Tim10 B (Timm10b).